A 241-amino-acid chain; its full sequence is Phosphoribosylaminoimidazole-succinocarboxamide synthase (241 aa).

This sequence belongs to the SAICAR synthetase family.

The catalysed reaction is 5-amino-1-(5-phospho-D-ribosyl)imidazole-4-carboxylate + L-aspartate + ATP = (2S)-2-[5-amino-1-(5-phospho-beta-D-ribosyl)imidazole-4-carboxamido]succinate + ADP + phosphate + 2 H(+). Its pathway is purine metabolism; IMP biosynthesis via de novo pathway; 5-amino-1-(5-phospho-D-ribosyl)imidazole-4-carboxamide from 5-amino-1-(5-phospho-D-ribosyl)imidazole-4-carboxylate: step 1/2. The chain is Phosphoribosylaminoimidazole-succinocarboxamide synthase from Lacticaseibacillus casei (strain BL23) (Lactobacillus casei).